The following is a 493-amino-acid chain: 3-octaprenyl-4-hydroxybenzoate carboxy-lyase (493 aa).

Mn(2+) is bound at residue asparagine 172. Residues 175-177 (IYR), 189-191 (RWL), and 194-195 (RG) contribute to the prenylated FMN site. Mn(2+) is bound at residue glutamate 238. The active-site Proton donor is aspartate 287.

This sequence belongs to the UbiD family. In terms of assembly, homohexamer. Prenylated FMN is required as a cofactor. The cofactor is Mn(2+).

It is found in the cell membrane. It catalyses the reaction a 4-hydroxy-3-(all-trans-polyprenyl)benzoate + H(+) = a 2-(all-trans-polyprenyl)phenol + CO2. It functions in the pathway cofactor biosynthesis; ubiquinone biosynthesis. Catalyzes the decarboxylation of 3-octaprenyl-4-hydroxy benzoate to 2-octaprenylphenol, an intermediate step in ubiquinone biosynthesis. The polypeptide is 3-octaprenyl-4-hydroxybenzoate carboxy-lyase (Shewanella frigidimarina (strain NCIMB 400)).